We begin with the raw amino-acid sequence, 340 residues long: Glycerol-3-phosphate dehydrogenase [NAD(P)+] (340 aa).

Ser11, Trp12, Arg33, and Lys106 together coordinate NADPH. The sn-glycerol 3-phosphate site is built by Lys106, Gly137, and Ser139. An NADPH-binding site is contributed by Ala141. Positions 192, 245, 255, 256, and 257 each coordinate sn-glycerol 3-phosphate. Lys192 (proton acceptor) is an active-site residue. Position 256 (Arg256) interacts with NADPH. Positions 280 and 282 each coordinate NADPH.

It belongs to the NAD-dependent glycerol-3-phosphate dehydrogenase family.

The protein resides in the cytoplasm. It catalyses the reaction sn-glycerol 3-phosphate + NAD(+) = dihydroxyacetone phosphate + NADH + H(+). It carries out the reaction sn-glycerol 3-phosphate + NADP(+) = dihydroxyacetone phosphate + NADPH + H(+). Its pathway is membrane lipid metabolism; glycerophospholipid metabolism. Functionally, catalyzes the reduction of the glycolytic intermediate dihydroxyacetone phosphate (DHAP) to sn-glycerol 3-phosphate (G3P), the key precursor for phospholipid synthesis. The chain is Glycerol-3-phosphate dehydrogenase [NAD(P)+] from Bacillus cereus (strain 03BB102).